The chain runs to 705 residues: Gamma-adducin (705 aa).

Residues 1-10 (MSSDTSQAVI) are compositionally biased toward polar residues. A disordered region spans residues 1-22 (MSSDTSQAVITTPPPPSMPHKE). An N-acetylserine modification is found at serine 2. Phosphoserine occurs at positions 31, 42, 64, 402, 414, 423, 442, and 461. 4 disordered regions span residues 472 to 495 (EDPS…VPLN), 535 to 556 (PSTM…PFSH), 572 to 612 (KQQG…EENH), and 658 to 705 (EITI…KVEA). A Glycyl lysine isopeptide (Lys-Gly) (interchain with G-Cter in SUMO2) cross-link involves residue lysine 484. Serine 583, serine 585, serine 590, serine 672, serine 676, serine 678, and serine 680 each carry phosphoserine. Residues 590-605 (SVSQIQSQTQSPQSVP) show a composition bias toward low complexity. A compositionally biased stretch (basic residues) spans 681–705 (PSKKKKKFRTPSFLKKNKKKEKVEA). Serine 682 is subject to Phosphoserine; by PKC. The tract at residues 683-700 (KKKKKFRTPSFLKKNKKK) is interaction with calmodulin.

The protein belongs to the aldolase class II family. Adducin subfamily. In terms of assembly, heterodimer of an alpha and a gamma subunit. Sumoylated. Post-translationally, proteolytically cleaved by asparagine endopeptidase (AEP) into 2 fragments. Overexpression of the 1-357 fragment induces neuronal apoptosis, and overexpression of either 1-357 or 358-706 fragment increases the degeneration of dendritic spines. Overexpression of the 1-357 fragment impairs neurite outgrowth by downregulating the expression of Rac2, and induces synaptic dysfunction and cognitive impairments in tau P301S transgenic mice, a mouse model for Alzheimer disease (AD). As to expression, expressed in kidney, brain, spleen, liver and heart. Expressed in renal interlobular arteries, afferent/efferent arterioles, parietal glomerular epithelial cells and microvilli of the luminal surface of the proximal tubule (at protein level). Expressed in podocytes (at protein level) Expressed in renal cortex (at protein level). Expressed in primary vascular smooth muscle cells (VSMCs) of the kidney (at protein level). Expressed in tubular cells and glomeruli (at protein level).

The protein resides in the cytoplasm. It localises to the cytoskeleton. It is found in the cell membrane. Membrane-cytoskeleton-associated protein that promotes the assembly of the spectrin-actin network. Plays a role in actin filament capping. Binds to calmodulin. Involved in myogenic reactivity of the renal afferent arteriole (Af-art), renal interlobular arteries and middle cerebral artery (MCA) to increased perfusion pressure. Involved in regulation of potassium channels in the vascular smooth muscle cells (VSMCs) of the Af-art and MCA ex vivo. Involved in regulation of glomerular capillary pressure, glomerular filtration rate (GFR) and glomerular nephrin expression in response to hypertension. Involved in renal blood flow (RBF) autoregulation. Plays a role in podocyte structure and function. Regulates globular monomer actin (G-actin) and filamentous polymer actin (F-actin) ratios in the primary podocytes affecting actin cytoskeleton organization. Regulates expression of synaptopodin, RhoA, Rac1 and CDC42 in the renal cortex and the primary podocytes. Regulates expression of nephrin in the glomeruli and in the primary podocytes, expression of nephrin and podocinin in the renal cortex, and expression of focal adhesion proteins integrin alpha-3 and integrin beta-1 in the glomeruli. Involved in cell migration and cell adhesion of podocytes, and in podocyte foot process effacement. Regulates expression of profibrotics markers MMP2, MMP9, TGF beta-1, tubular tight junction protein E-cadherin, and mesenchymal markers vimentin and alpha-SMA. Promotes the growth of neurites. The chain is Gamma-adducin (Add3) from Rattus norvegicus (Rat).